We begin with the raw amino-acid sequence, 458 residues long: Exodeoxyribonuclease 7 large subunit (458 aa).

It belongs to the XseA family. Heterooligomer composed of large and small subunits.

It localises to the cytoplasm. The enzyme catalyses Exonucleolytic cleavage in either 5'- to 3'- or 3'- to 5'-direction to yield nucleoside 5'-phosphates.. In terms of biological role, bidirectionally degrades single-stranded DNA into large acid-insoluble oligonucleotides, which are then degraded further into small acid-soluble oligonucleotides. This is Exodeoxyribonuclease 7 large subunit from Yersinia enterocolitica serotype O:8 / biotype 1B (strain NCTC 13174 / 8081).